Here is a 925-residue protein sequence, read N- to C-terminus: Bifunctional glutamine synthetase adenylyltransferase/adenylyl-removing enzyme (925 aa).

An adenylyl removase region spans residues 1-426 (MTDASDLLSL…AQFDQVFADK (426 aa)). The interval 436–925 (DQAAGCIWSG…AALWARVFGA (490 aa)) is adenylyl transferase.

It belongs to the GlnE family. It depends on Mg(2+) as a cofactor.

The enzyme catalyses [glutamine synthetase]-O(4)-(5'-adenylyl)-L-tyrosine + phosphate = [glutamine synthetase]-L-tyrosine + ADP. The catalysed reaction is [glutamine synthetase]-L-tyrosine + ATP = [glutamine synthetase]-O(4)-(5'-adenylyl)-L-tyrosine + diphosphate. In terms of biological role, involved in the regulation of glutamine synthetase GlnA, a key enzyme in the process to assimilate ammonia. When cellular nitrogen levels are high, the C-terminal adenylyl transferase (AT) inactivates GlnA by covalent transfer of an adenylyl group from ATP to specific tyrosine residue of GlnA, thus reducing its activity. Conversely, when nitrogen levels are low, the N-terminal adenylyl removase (AR) activates GlnA by removing the adenylyl group by phosphorolysis, increasing its activity. The regulatory region of GlnE binds the signal transduction protein PII (GlnB) which indicates the nitrogen status of the cell. This chain is Bifunctional glutamine synthetase adenylyltransferase/adenylyl-removing enzyme, found in Burkholderia mallei (strain ATCC 23344).